Here is a 444-residue protein sequence, read N- to C-terminus: Deoxyguanosinetriphosphate triphosphohydrolase-like protein (444 aa).

The disordered stretch occupies residues 1–28; the sequence is MTDAVWNERRLGEDKQRRNDHRSPYQRD. In terms of domain architecture, HD spans 59–250; sequence RLTHSLEVSQ…MELADDIAYA (192 aa).

It belongs to the dGTPase family. Type 2 subfamily.

This is Deoxyguanosinetriphosphate triphosphohydrolase-like protein from Shewanella pealeana (strain ATCC 700345 / ANG-SQ1).